Here is a 273-residue protein sequence, read N- to C-terminus: NADPH-dependent 7-cyano-7-deazaguanine reductase (273 aa).

81-83 (VES) is a binding site for substrate. 83–84 (SK) lines the NADPH pocket. Residue Cys-179 is the Thioimide intermediate of the active site. Asp-186 (proton donor) is an active-site residue. 218–219 (AE) contacts substrate. 247 to 248 (RG) is an NADPH binding site.

This sequence belongs to the GTP cyclohydrolase I family. QueF type 2 subfamily. In terms of assembly, homodimer.

The protein localises to the cytoplasm. It carries out the reaction 7-aminomethyl-7-carbaguanine + 2 NADP(+) = 7-cyano-7-deazaguanine + 2 NADPH + 3 H(+). The protein operates within tRNA modification; tRNA-queuosine biosynthesis. Catalyzes the NADPH-dependent reduction of 7-cyano-7-deazaguanine (preQ0) to 7-aminomethyl-7-deazaguanine (preQ1). The polypeptide is NADPH-dependent 7-cyano-7-deazaguanine reductase (Rickettsia massiliae (strain Mtu5)).